The sequence spans 609 residues: Isopenicillin N epimerase component 1 (609 aa).

185 to 196 (MLSGSGTTGLPK) contributes to the AMP binding site. Residues 545–570 (STDNHKHNKVPLRDEGVDPRSMGSKV) form a disordered region.

The protein belongs to the ATP-dependent AMP-binding enzyme family.

It catalyses the reaction isopenicillin N = penicillin N. Its pathway is antibiotic biosynthesis; cephalosporin C biosynthesis. In terms of biological role, together with cefD2, catalyzes the reversible isomerization between isopenicillin N and penicillin N. This two-component IPN epimerase system may function by two sequential steps, an activation of isopenicillin N by the acyl-CoA synthase component cefD1, followed by epimerization by the acyl-CoA racemase component cefD2. The chain is Isopenicillin N epimerase component 1 (cefD1) from Hapsidospora chrysogena (Acremonium chrysogenum).